Reading from the N-terminus, the 248-residue chain is Tetraspanin-17 (248 aa).

The Cytoplasmic portion of the chain corresponds to 1–7 (MSEVRTG). Residues 8–28 (FLTMTTIILISIGLTMMGTGL) traverse the membrane as a helical segment. Topologically, residues 29 to 44 (YQKTTMSSCIRETSSQ) are extracellular. A helical transmembrane segment spans residues 45–65 (FTLLGLLLLLIPQIGLYGICC). Residues 66 to 69 (RSKR) are Cytoplasmic-facing. Residues 70–90 (LFNFFFYGMVVLIIIVSYYSI) form a helical membrane-spanning segment. Residues 91-210 (KCSIYNTTFG…ILKAIVHQWK (120 aa)) are Extracellular-facing. N-linked (GlcNAc...) asparagine glycans are attached at residues Asn96, Asn109, and Asn141. A helical membrane pass occupies residues 211-231 (YLSMFAYPALVLSCISLAIAW). Over 232-248 (SLKETIHENEDYRGSYS) the chain is Cytoplasmic.

This sequence belongs to the tetraspanin (TM4SF) family.

It localises to the membrane. May be involved in the regulation of cell differentiation. In Arabidopsis thaliana (Mouse-ear cress), this protein is Tetraspanin-17 (TET17).